Reading from the N-terminus, the 368-residue chain is Caffeine synthase 3 (368 aa).

An S-adenosyl-L-homocysteine-binding site is contributed by Tyr-23. Thr-30 contacts caffeine. S-adenosyl-L-homocysteine-binding residues include Cys-65, Asn-70, Asp-102, Leu-103, Ser-137, and Phe-138. Caffeine is bound by residues Tyr-155, His-158, and Trp-159. A Mg(2+)-binding site is contributed by Asn-176. Arg-224 provides a ligand contact to caffeine. Mg(2+) is bound by residues Asp-262, Phe-264, and Asn-265. Residue Phe-320 participates in caffeine binding.

It belongs to the methyltransferase superfamily. Type-7 methyltransferase family. Mg(2+) serves as cofactor.

The enzyme catalyses theobromine + S-adenosyl-L-methionine = caffeine + S-adenosyl-L-homocysteine + H(+). It carries out the reaction 7-methylxanthine + S-adenosyl-L-methionine = theobromine + S-adenosyl-L-homocysteine + H(+). It participates in alkaloid biosynthesis. In terms of biological role, involved in the biosynthesis of caffeine. Catalyzes the conversion of 7-methylxanthine (7mX) to theobromine and of theobromine to caffeine. This Camellia sinensis (Tea plant) protein is Caffeine synthase 3.